Here is a 226-residue protein sequence, read N- to C-terminus: Eukaryotic translation initiation factor 3 subunit K (226 aa).

The PCI domain maps to 42–200 (YNLDANLSLL…QLIVLPRNEF (159 aa)).

Belongs to the eIF-3 subunit K family. In terms of assembly, component of the eukaryotic translation initiation factor 3 (eIF-3) complex.

It localises to the cytoplasm. Functionally, component of the eukaryotic translation initiation factor 3 (eIF-3) complex, which is involved in protein synthesis of a specialized repertoire of mRNAs and, together with other initiation factors, stimulates binding of mRNA and methionyl-tRNAi to the 40S ribosome. The eIF-3 complex specifically targets and initiates translation of a subset of mRNAs involved in cell proliferation. This chain is Eukaryotic translation initiation factor 3 subunit K (TIF3K1), found in Oryza sativa subsp. japonica (Rice).